The sequence spans 797 residues: Xaa-Pro dipeptidyl-peptidase (797 aa).

Catalysis depends on charge relay system residues S370, D490, and H521.

Belongs to the peptidase S15 family. In terms of assembly, homodimer.

The protein localises to the cytoplasm. The catalysed reaction is Hydrolyzes Xaa-Pro-|- bonds to release unblocked, N-terminal dipeptides from substrates including Ala-Pro-|-p-nitroanilide and (sequentially) Tyr-Pro-|-Phe-Pro-|-Gly-Pro-|-Ile.. Its function is as follows. Removes N-terminal dipeptides sequentially from polypeptides having unsubstituted N-termini provided that the penultimate residue is proline. The polypeptide is Xaa-Pro dipeptidyl-peptidase (Lacticaseibacillus casei (strain BL23) (Lactobacillus casei)).